A 566-amino-acid polypeptide reads, in one-letter code: CTP synthase (566 aa).

Residues 1 to 282 (MSIKRAQLGG…DAYIIDQLGL (282 aa)) are amidoligase domain. Position 23 (S23) interacts with CTP. S23 is a binding site for UTP. Residues 24–29 (SLGKGL) and D81 each bind ATP. D81 and E156 together coordinate Mg(2+). CTP is bound by residues 163 to 165 (DIE), 203 to 208 (KTKPTQ), and K239. UTP contacts are provided by residues 203–208 (KTKPTQ) and K239. The region spanning 308–556 (TIGLVGKYID…IGAALDRQKA (249 aa)) is the Glutamine amidotransferase type-1 domain. An L-glutamine-binding site is contributed by G371. Residue C398 is the Nucleophile; for glutamine hydrolysis of the active site. Residues 399-402 (LGLQ), E422, and R482 each bind L-glutamine. Active-site residues include H529 and E531.

It belongs to the CTP synthase family. As to quaternary structure, homotetramer.

The enzyme catalyses UTP + L-glutamine + ATP + H2O = CTP + L-glutamate + ADP + phosphate + 2 H(+). It catalyses the reaction L-glutamine + H2O = L-glutamate + NH4(+). The catalysed reaction is UTP + NH4(+) + ATP = CTP + ADP + phosphate + 2 H(+). It participates in pyrimidine metabolism; CTP biosynthesis via de novo pathway; CTP from UDP: step 2/2. With respect to regulation, allosterically activated by GTP, when glutamine is the substrate; GTP has no effect on the reaction when ammonia is the substrate. The allosteric effector GTP functions by stabilizing the protein conformation that binds the tetrahedral intermediate(s) formed during glutamine hydrolysis. Inhibited by the product CTP, via allosteric rather than competitive inhibition. Its function is as follows. Catalyzes the ATP-dependent amination of UTP to CTP with either L-glutamine or ammonia as the source of nitrogen. Regulates intracellular CTP levels through interactions with the four ribonucleotide triphosphates. The chain is CTP synthase from Leifsonia xyli subsp. xyli (strain CTCB07).